We begin with the raw amino-acid sequence, 125 residues long: UPF0734 protein DDB_G0273871/DDB_G0273177 (125 aa).

This sequence belongs to the UPF0734 family.

The polypeptide is UPF0734 protein DDB_G0273871/DDB_G0273177 (Dictyostelium discoideum (Social amoeba)).